We begin with the raw amino-acid sequence, 1294 residues long: ATPase PglY (1294 aa).

A disordered region spans residues 1205–1263 (TQAAATPPPAPAASQPTAGDLSLDTPTSDPRIPYTSQETPTSSGGAGTARTSGGRRTTA). Positions 1228–1244 (DTPTSDPRIPYTSQETP) are enriched in polar residues. The span at 1252 to 1263 (TARTSGGRRTTA) shows a compositional bias: low complexity.

Functionally, BREX systems (bacteriophage exclusion) provide immunity against bacteriophage. Part of a type 2 BREX system. Previously called the phage growth limitation (Pgl) system, it confers protection against bacteriophage phiC31. The bacteria allows one cycle of phage infection, but subsequent cycles are impaired, protecting the original bacterial colony. The system undergoes high rates (10(-3) to 10(-4)) of phase reversion, i.e. loss and regain of phiC31 resistance. When the pglW-pglX-pglY-pglZ genes are transformed into a susceptible S.lividans (strain 1326) they confer resistance to infection by phage phiC31 and phiBT1; all 4 genes are necessary. Its function is as follows. Hydrolyzes ATP but not AMP, ADP, GMP, GDP or GTP; activity is inhibited by the non-hydrolyzable ATP analog 5-adenylyl beta,gamma-imidodiphosphate. In Streptomyces coelicolor (strain ATCC BAA-471 / A3(2) / M145), this protein is ATPase PglY.